A 207-amino-acid chain; its full sequence is Glycerol-3-phosphate acyltransferase 1 (207 aa).

5 helical membrane passes run 3-23 (YVIA…QIVG), 53-73 (IVVA…LLIL), 85-105 (HIYI…PITM), 127-147 (IALI…YLAV), and 154-174 (ISFL…IVVG).

The protein belongs to the PlsY family. As to quaternary structure, probably interacts with PlsX.

The protein resides in the cell membrane. It catalyses the reaction an acyl phosphate + sn-glycerol 3-phosphate = a 1-acyl-sn-glycero-3-phosphate + phosphate. It functions in the pathway lipid metabolism; phospholipid metabolism. Its function is as follows. Catalyzes the transfer of an acyl group from acyl-phosphate (acyl-PO(4)) to glycerol-3-phosphate (G3P) to form lysophosphatidic acid (LPA). This enzyme utilizes acyl-phosphate as fatty acyl donor, but not acyl-CoA or acyl-ACP. This Oceanobacillus iheyensis (strain DSM 14371 / CIP 107618 / JCM 11309 / KCTC 3954 / HTE831) protein is Glycerol-3-phosphate acyltransferase 1.